The primary structure comprises 545 residues: Ribulokinase (545 aa).

This sequence belongs to the ribulokinase family.

It carries out the reaction D-ribulose + ATP = D-ribulose 5-phosphate + ADP + H(+). The catalysed reaction is L-ribulose + ATP = L-ribulose 5-phosphate + ADP + H(+). It participates in carbohydrate degradation; L-arabinose degradation via L-ribulose; D-xylulose 5-phosphate from L-arabinose (bacterial route): step 2/3. The sequence is that of Ribulokinase from Staphylococcus aureus (strain USA300).